The chain runs to 163 residues: Large ribosomal subunit protein uL10 (163 aa).

This sequence belongs to the universal ribosomal protein uL10 family. As to quaternary structure, part of the ribosomal stalk of the 50S ribosomal subunit. The N-terminus interacts with L11 and the large rRNA to form the base of the stalk. The C-terminus forms an elongated spine to which L12 dimers bind in a sequential fashion forming a multimeric L10(L12)X complex.

Forms part of the ribosomal stalk, playing a central role in the interaction of the ribosome with GTP-bound translation factors. In Haemophilus ducreyi (strain 35000HP / ATCC 700724), this protein is Large ribosomal subunit protein uL10.